A 616-amino-acid chain; its full sequence is KIF-binding protein (616 aa).

Positions 52 to 78 are disordered; sequence EEEEESEAEGKEERRDGPESGGRRGES. Residues 59 to 78 are compositionally biased toward basic and acidic residues; sequence AEGKEERRDGPESGGRRGES.

It belongs to the KIF-binding protein family.

It is found in the cytoplasm. It localises to the cytoskeleton. Activator of KIF1B plus-end-directed microtubule motor activity. Required for organization of axonal microtubules, and axonal outgrowth and maintenance during peripheral and central nervous system development. The polypeptide is KIF-binding protein (Xenopus tropicalis (Western clawed frog)).